The sequence spans 142 residues: Large ribosomal subunit protein uL11 (142 aa).

This sequence belongs to the universal ribosomal protein uL11 family. As to quaternary structure, part of the ribosomal stalk of the 50S ribosomal subunit. Interacts with L10 and the large rRNA to form the base of the stalk. L10 forms an elongated spine to which L12 dimers bind in a sequential fashion forming a multimeric L10(L12)X complex. In terms of processing, one or more lysine residues are methylated.

Forms part of the ribosomal stalk which helps the ribosome interact with GTP-bound translation factors. The chain is Large ribosomal subunit protein uL11 from Mycolicibacterium vanbaalenii (strain DSM 7251 / JCM 13017 / BCRC 16820 / KCTC 9966 / NRRL B-24157 / PYR-1) (Mycobacterium vanbaalenii).